Reading from the N-terminus, the 480-residue chain is Proline--tRNA ligase (480 aa).

The protein belongs to the class-II aminoacyl-tRNA synthetase family. ProS type 3 subfamily. Homodimer.

The protein localises to the cytoplasm. The enzyme catalyses tRNA(Pro) + L-proline + ATP = L-prolyl-tRNA(Pro) + AMP + diphosphate. Catalyzes the attachment of proline to tRNA(Pro) in a two-step reaction: proline is first activated by ATP to form Pro-AMP and then transferred to the acceptor end of tRNA(Pro). The polypeptide is Proline--tRNA ligase (Metallosphaera sedula (strain ATCC 51363 / DSM 5348 / JCM 9185 / NBRC 15509 / TH2)).